The chain runs to 571 residues: Membrane protein insertase YidC (571 aa).

Residues 4–24 traverse the membrane as a helical segment; the sequence is TRVFLIFAWLMVAVLLWMEWS. Positions 29–76 are disordered; it reads APTPAPTTTSAPAAAQSVPGATPGSVPNAQVPGAPGQAAVQAQASATP. Low complexity-rich tracts occupy residues 34–43 and 57–76; these read PTTTSAPAAA and AQVP…SATP. Helical transmembrane passes span 369 to 389, 440 to 460, 483 to 503, and 518 to 538; these read LVGN…LVLY, GGCL…WVLV, YFIL…LTPA, and PLVF…YWVV.

Belongs to the OXA1/ALB3/YidC family. Type 1 subfamily. In terms of assembly, interacts with the Sec translocase complex via SecD. Specifically interacts with transmembrane segments of nascent integral membrane proteins during membrane integration.

The protein resides in the cell inner membrane. In terms of biological role, required for the insertion and/or proper folding and/or complex formation of integral membrane proteins into the membrane. Involved in integration of membrane proteins that insert both dependently and independently of the Sec translocase complex, as well as at least some lipoproteins. Aids folding of multispanning membrane proteins. The protein is Membrane protein insertase YidC of Stenotrophomonas maltophilia (strain R551-3).